Reading from the N-terminus, the 600-residue chain is Pyranose dehydrogenase (600 aa).

The N-terminal stretch at Met-1–Gly-25 is a signal peptide. N-linked (GlcNAc...) asparagine glycosylation is found at Asn-99 and Asn-114. Position 127 is a tele-8alpha-FAD histidine (His-127). 5 N-linked (GlcNAc...) asparagine glycosylation sites follow: Asn-199, Asn-275, Asn-342, Asn-399, and Asn-507. The active-site Proton acceptor is His-535. The N-linked (GlcNAc...) asparagine glycan is linked to Asn-546. His-579 is a catalytic residue.

This sequence belongs to the GMC oxidoreductase family. As to quaternary structure, monomer. FAD serves as cofactor. In terms of processing, N-glycosylated.

Its subcellular location is the secreted. It carries out the reaction pyranose + acceptor = pyranos-2-ulose + reduced acceptor.. The catalysed reaction is pyranose + acceptor = pyranos-3-ulose + reduced acceptor.. The enzyme catalyses pyranose + acceptor = pyranos-2,3-diulose + reduced acceptor.. It catalyses the reaction a pyranoside + acceptor = a pyranosid-3-ulose + reduced acceptor.. It carries out the reaction a pyranoside + acceptor = a pyranosid-3,4-diulose + reduced acceptor.. Functionally, catalyzes the single-oxidation or sequential double oxidation reaction of carbohydrates primarily at carbon-2 and/or carbon-3 with the concomitant reduction of the flavin. The enzyme exhibits a broad sugar substrate specificity, oxidizing different aldopyranoses to the corresponding C-1, C-2, C-3 or C-1,2, C-2,3 and C-3,4 (di)dehydro sugars with substrate-specific regioselectivity. Accepts only a narrow range of electron acceptors such as substituted benzoquinones and complexed metal ions and reacts extremely slowly with O(2) as acceptor. May play a role in the natural recycling of plant matter by oxidizing all major monosaccharides in lignocellulose and by reducing quinone compounds or reactive radical species generated during lignin depolymerization. The chain is Pyranose dehydrogenase from Agaricus xanthodermus (Poison yellow meadow mushroom).